Consider the following 504-residue polypeptide: Maturase K (504 aa).

It belongs to the intron maturase 2 family. MatK subfamily.

It localises to the plastid. The protein resides in the chloroplast. Its function is as follows. Usually encoded in the trnK tRNA gene intron. Probably assists in splicing its own and other chloroplast group II introns. This Quercus rubra (Northern red oak) protein is Maturase K.